The following is a 450-amino-acid chain: Phosphoglucosamine mutase (450 aa).

The Phosphoserine intermediate role is filled by Ser-101. Mg(2+)-binding residues include Ser-101, Asp-242, Asp-244, and Asp-246. The residue at position 101 (Ser-101) is a Phosphoserine.

Belongs to the phosphohexose mutase family. It depends on Mg(2+) as a cofactor. Post-translationally, activated by phosphorylation.

The enzyme catalyses alpha-D-glucosamine 1-phosphate = D-glucosamine 6-phosphate. Catalyzes the conversion of glucosamine-6-phosphate to glucosamine-1-phosphate. This Rhodopseudomonas palustris (strain HaA2) protein is Phosphoglucosamine mutase.